We begin with the raw amino-acid sequence, 1066 residues long: Ankyrin repeat protein nuc-2 (1066 aa).

The SPX domain occupies 1–166 (MKFGKQIQKR…KSKTKELYLS (166 aa)). ANK repeat units follow at residues 268 to 298 (RVTR…DIQS), 336 to 366 (YGRV…TINL), 370 to 399 (DNFT…RIDP), 403 to 432 (TDHV…KILA), 435 to 465 (EGLY…DLDQ), 470 to 499 (YGWT…DPNI), and 503 to 532 (KDLP…EKAA). One can recognise a GP-PDE domain in the interval 717 to 1048 (ITDFETYWKA…DPFPKLPKGV (332 aa)). A disordered region spans residues 923-963 (KQQQQGSCSKGDGDEDMGGTTAASRREAADERTLQSDGRRT). A compositionally biased stretch (basic and acidic residues) spans 946–962 (SRREAADERTLQSDGRR).

In terms of biological role, controls phosphorus acquisition. The polypeptide is Ankyrin repeat protein nuc-2 (nuc-2) (Neurospora crassa (strain ATCC 24698 / 74-OR23-1A / CBS 708.71 / DSM 1257 / FGSC 987)).